The following is a 1541-amino-acid chain: MSFLEEARAAGRAVVLALVLLLLPAVPVGASVPPRPLLPLQPGMPHVCAEQELTLVGRRQPCVQALSHTVPVWKAGCGWQAWCVGHERRTVYYMGYRQVYTTEARTVLRCCRGWMQQPDEEGCLSAECSASLCFHGGRCVPGSAQPCHCPPGFQGPRCQYDVDECRTHNGGCQHRCVNTPGSYLCECKPGFRLHTDSRTCLAINSCALGNGGCQHHCVQLTITRHRCQCRPGFQLQEDGRHCVRRSPCANRNGSCMHRCQVVRGLARCECHVGYQLAADGKACEDVDECAAGLAQCAHGCLNTQGSFKCVCHAGYELGADGRQCYRIEMEIVNSCEANNGGCSHGCSHTSAGPLCTCPRGYELDTDQRTCIDVDDCADSPCCQQVCTNNPGGYECGCYAGYRLSADGCGCEDVDECASSRGGCEHHCTNLAGSFQCSCEAGYRLHEDRRGCSPLEEPMVDLDGELPFVRPLPHIAVLQDELPQLFQDDDVGADEEEAELRGEHTLTEKFVCLDDSFGHDCSLTCDDCRNGGTCLLGLDGCDCPEGWTGLICNETCPPDTFGKNCSFSCSCQNGGTCDSVTGACRCPPGVSGTNCEDGCPKGYYGKHCRKKCNCANRGRCHRLYGACLCDPGLYGRFCHLTCPPWAFGPGCSEECQCVQPHTQSCDKRDGSCSCKAGFRGERCQAECELGYFGPGCWQACTCPVGVACDSVSGECGKRCPAGFQGEDCGQECPVGTFGVNCSSSCSCGGAPCHGVTGQCRCPPGRTGEDCEADCPEGRWGLGCQEICPACQHAARCDPETGACLCLPGFVGSRCQDVCPAGWYGPSCQTRCSCANDGHCHPATGHCSCAPGWTGFSCQRACDTGHWGPDCSHPCNCSAGHGSCDAISGLCLCEAGYVGPRCEQQCPQGHFGPGCEQRCQCQHGAACDHVSGACTCPAGWRGTFCEHACPAGFFGLDCRSACNCTAGAACDAVNGSCLCPAGRRGPRCAETCPAHTYGHNCSQACACFNGASCDPVHGQCHCAPGWMGPSCLQACPAGLYGDNCRHSCLCQNGGTCDPVSGHCACPEGWAGLACEKECLPRDVRAGCRHSGGCLNGGLCDPHTGRCLCPAGWTGDKCQSPCLRGWFGEACAQRCSCPPGAACHHVTGACRCPPGFTGSGCEQACPPGSFGEDCAQMCQCPGENPACHPATGTCSCAAGYHGPSCQQRCPPGRYGPGCEQLCGCLNGGSCDAATGACRCPTGFLGTDCNLTCPQGRFGPNCTHVCGCGQGAACDPVTGTCLCPPGRAGVRCERGCPQNRFGVGCEHTCSCRNGGLCHASNGSCSCGLGWTGRHCELACPPGRYGAACHLECSCHNNSTCEPATGTCRCGPGFYGQACEHPCPPGFHGAGCQGLCWCQHGAPCDPISGRCLCPAGFHGHFCERGCEPGSFGEGCHQRCDCDGGAPCDPVTGLCLCPPGRSGATCNLDCRRGQFGPSCTLHCDCGGGADCDPVSGQCHCVDGYMGPTCREGGPLRLPENPSLAQGSAGTLPASSRPTSRSGGPARH.

A signal peptide spans M1–A30. One can recognise an EMI domain in the interval M44–S125. 15 cysteine pairs are disulfide-bonded: C48–C111, C77–C83, C110–C123, C128–C139, C133–C147, C149–C158, C165–C176, C172–C185, C187–C200, C242–C255, C248–C268, C270–C283, C289–C300, C296–C309, and C311–C324. The EGF-like 1 domain occupies L124–Q159. In terms of domain architecture, EGF-like 2; calcium-binding spans D161–L201. 2 EGF-like domains span residues C206–C242 and D238–E284. N252 is a glycosylation site (N-linked (GlcNAc...) asparagine). One can recognise an EGF-like 5; calcium-binding domain in the interval D285–Y325. EGF-like domains lie at C335–C370 and D375–E411. The 41-residue stretch at D412–S452 folds into the EGF-like 8; calcium-binding domain. Cystine bridges form between C416–C427, C423–C436, C438–C451, C520–C533, C527–C540, C542–C551, C564–C576, C570–C583, C585–C594, C607–C619, C613–C626, and C628–C637. 19 consecutive EGF-like domains span residues F516–N552, F560–E595, Y603–H638, F736–E770, Q783–Q814, Y822–Q857, W865–E901, F909–E944, D955–A987, Y995–L1030, Y1038–E1073, V1081–Q1116, F1124–E1159, Y1211–N1246, F1254–E1289, F1297–E1332, H1345–E1375, H1383–E1418, and F1469–R1504. Residue N739 is glycosylated (N-linked (GlcNAc...) asparagine). Disulfide bonds link C740–C751, C744–C758, C760–C769, C786–C795, C789–C802, C804–C813, C826–C838, C832–C845, C847–C856, C869–C882, C873–C889, C891–C900, C913–C925, C919–C932, and C934–C943. Cystine bridges form between C999-C1011, C1005-C1018, C1020-C1029, C1042-C1054, C1048-C1061, C1063-C1072, C1085-C1097, C1091-C1104, C1106-C1115, C1128-C1140, C1134-C1147, C1149-C1158, C1215-C1227, C1221-C1234, C1236-C1245, C1258-C1270, C1264-C1277, C1279-C1288, C1301-C1313, C1307-C1320, C1322-C1331, C1348-C1356, C1350-C1363, C1365-C1374, C1387-C1399, C1393-C1406, C1408-C1417, C1473-C1485, C1479-C1492, and C1494-C1503. A disordered region spans residues L1509 to H1541. Residues S1516–S1535 show a composition bias toward polar residues.

Its subcellular location is the secreted. The chain is Multiple epidermal growth factor-like domains protein 6 (MEGF6) from Homo sapiens (Human).